We begin with the raw amino-acid sequence, 149 residues long: Large ribosomal subunit protein bL9 (149 aa).

It belongs to the bacterial ribosomal protein bL9 family.

In terms of biological role, binds to the 23S rRNA. This chain is Large ribosomal subunit protein bL9, found in Xanthomonas oryzae pv. oryzae (strain MAFF 311018).